The following is a 439-amino-acid chain: High-energy light unresponsive protein 1 (439 aa).

Over 1 to 67 the chain is Cytoplasmic; the sequence is MPPPSSHSNI…LGLNQSIRPN (67 aa). The helical transmembrane segment at 68–88 threads the bilayer; it reads NSLLFRIYSWLVFCLLLFTTL. Over 89–114 the chain is Extracellular; that stretch reads RKFNQVGVRPNGTRENLQEFFANPRS. The chain crosses the membrane as a helical span at residues 115–135; sequence MITLCNALIMLSGLLASLQLY. The Cytoplasmic portion of the chain corresponds to 136-164; the sequence is TLGAKRLKPLKILCQFSLNVRTKQAERRQ. Residues 165-185 form a helical membrane-spanning segment; sequence FMINTFLAVFSGLLALTMAAT. Over 186 to 211 the chain is Extracellular; that stretch reads YAMSKWGYILYIVGTPNLDTETIFCV. Residues 212-232 traverse the membrane as a helical segment; sequence LLDSYALFVSRAAISALAILF. At 233-290 the chain is on the cytoplasmic side; it reads YQHCSVIRRSIKHLINEMVPAEQDECPLPESSLQKIHDCQISYQRIFNGKAVIEEYYS. The helical transmembrane segment at 291–311 threads the bilayer; it reads FVLFYSYGVCIPIFCFLMFVG. Topologically, residues 312-324 are extracellular; that stretch reads MSAQSICWSEVVS. The helical transmembrane segment at 325–345 threads the bilayer; it reads IVIWIVNAILVLLLFSLPAFM. Topologically, residues 346 to 402 are cytoplasmic; the sequence is INEDGDRLVASSFRMYHETFHEERDLTVLSQMTFFTFQIHSTKLTLSACNYFYMDRS. A helical transmembrane segment spans residues 403–423; that stretch reads ILLSLFSAILTYFLILWEFDI. Over 424-439 the chain is Extracellular; the sequence is KNNQSLQNIANHTIHT.

Belongs to the insect chemoreceptor superfamily. Gustatory receptor (GR) family. Expressed in the AVG and PVT neurons of the tail.

It localises to the cell membrane. Its function is as follows. Photoreceptor for short wavelength (UV) light that mediates UV-light-induced avoidance behavior. Directly senses and absorbs both UV-A and UV-B light with very high efficiency. Absorption of UV-B but not UV-A light shows resistance to photobleaching. In contrast to other photoreceptors, does not use a prosthetic chromophore to capture photons and only depends on its protein conformation. Might have a role in response to white light exposure. The protein is High-energy light unresponsive protein 1 of Caenorhabditis elegans.